A 473-amino-acid polypeptide reads, in one-letter code: BPI fold-containing family B member 3 (473 aa).

The first 20 residues, 1-20 (MMPGVYALLLLWGLATPCLG), serve as a signal peptide directing secretion. Asparagine 139 is a glycosylation site (N-linked (GlcNAc...) asparagine). Residues cysteine 161 and cysteine 196 are joined by a disulfide bond.

Belongs to the BPI/LBP/Plunc superfamily. BPI/LBP family. As to expression, highly expressed in olfactory mucosa but undetectable in thymus, kidney, lung, brain, spleen and liver.

The protein localises to the secreted. Functionally, may have the capacity to recognize and bind specific classes of odorants. May act as a carrier molecule, transporting odorants across the mucus layer to access receptor sites. May serve as a primary defense mechanism by recognizing and removing potentially harmful odorants or pathogenic microorganisms from the mucosa or clearing excess odorant from mucus to enable new odorant stimuli to be received. This Rattus norvegicus (Rat) protein is BPI fold-containing family B member 3.